Consider the following 809-residue polypeptide: Cell division control protein 48 homolog A (809 aa).

Ser-2 bears the N-acetylserine mark. The residue at position 41 (Ser-41) is a Phosphoserine. ADP contacts are provided by residues Gly-210, Gly-248–Leu-256, and His-387. Residue Gly-521–Leu-529 coordinates ATP. The segment at Ala-782–Asn-809 is disordered. The span at Ala-791–Ala-801 shows a compositional bias: low complexity.

The protein belongs to the AAA ATPase family. As to quaternary structure, homohexamer. Interacts with SERK1, GRF6, KAPP and SYP31, but not with KNOLLE. Component of the SERK1 signaling complex, composed of KAPP, CDC48A, GRF6 or GRF7, SERK1, SERK2, SERK3/BAK1 and BRI1. Interacts with PUX1, PUX2, PUX3, PUX4, PUX5, PUX7 and PUX11 via its N-terminus. Phosphorylated on at least one threonine residue and on Ser-41 by SERK1.

It localises to the nucleus. Its subcellular location is the cytoplasm. The protein resides in the cytoskeleton. It is found in the phragmoplast. The protein localises to the cell membrane. Probably functions in cell division and growth processes. Interacts with certain SNAREs as part of specialized membrane fusion events where vesicles from the same organelle fuse (homotypic fusion). The sequence is that of Cell division control protein 48 homolog A (CDC48A) from Arabidopsis thaliana (Mouse-ear cress).